Here is a 617-residue protein sequence, read N- to C-terminus: Dihydroxy-acid dehydratase (617 aa).

D81 contributes to the Mg(2+) binding site. C122 lines the [2Fe-2S] cluster pocket. D123 and K124 together coordinate Mg(2+). K124 is subject to N6-carboxylysine. A [2Fe-2S] cluster-binding site is contributed by C195. Residue E491 participates in Mg(2+) binding. The active-site Proton acceptor is the S517.

This sequence belongs to the IlvD/Edd family. In terms of assembly, homodimer. [2Fe-2S] cluster is required as a cofactor. It depends on Mg(2+) as a cofactor.

It catalyses the reaction (2R)-2,3-dihydroxy-3-methylbutanoate = 3-methyl-2-oxobutanoate + H2O. The catalysed reaction is (2R,3R)-2,3-dihydroxy-3-methylpentanoate = (S)-3-methyl-2-oxopentanoate + H2O. The protein operates within amino-acid biosynthesis; L-isoleucine biosynthesis; L-isoleucine from 2-oxobutanoate: step 3/4. It functions in the pathway amino-acid biosynthesis; L-valine biosynthesis; L-valine from pyruvate: step 3/4. In terms of biological role, functions in the biosynthesis of branched-chain amino acids. Catalyzes the dehydration of (2R,3R)-2,3-dihydroxy-3-methylpentanoate (2,3-dihydroxy-3-methylvalerate) into 2-oxo-3-methylpentanoate (2-oxo-3-methylvalerate) and of (2R)-2,3-dihydroxy-3-methylbutanoate (2,3-dihydroxyisovalerate) into 2-oxo-3-methylbutanoate (2-oxoisovalerate), the penultimate precursor to L-isoleucine and L-valine, respectively. The chain is Dihydroxy-acid dehydratase from Caulobacter vibrioides (strain ATCC 19089 / CIP 103742 / CB 15) (Caulobacter crescentus).